The chain runs to 334 residues: MLDDRSKLLLKALVERYIAEGQPVGSRTLSRASGLELSPATIRNVMADLEDLGLIASPHTSAGRVPTAKGYRLFVDTMLTVQQEQLPTVQLMPEQPQKVIANAAHLLSSLSQFVGVVMAPRRASVFRHIEFLRLSEKRFLVIIVSPDGDVQNRVIFTEADYSQSQLVEAANFLNANYAGLTMEQVRERLKLEVDKLRGEIAALMQAAVSVDSEAMSGSQDEVVFSGERNLLSVSDFSSDMSHLRRAFDLFEQKTQILRLLDISSRAEGVRIFIGGESQVVPFEELSVVSAPYEVDGQVVGTLGVIGPTRMPYDRMIQIVDITSKLVSNALSHRK.

This sequence belongs to the HrcA family.

Its function is as follows. Negative regulator of class I heat shock genes (grpE-dnaK-dnaJ and groELS operons). Prevents heat-shock induction of these operons. This chain is Heat-inducible transcription repressor HrcA, found in Acidovorax ebreus (strain TPSY) (Diaphorobacter sp. (strain TPSY)).